The chain runs to 253 residues: Redox-sensing transcriptional repressor Rex (253 aa).

The segment at residues 26–65 (LYLRALTALSERSVPTVSSEELATAAGVNSAKLRKDFSYL) is a DNA-binding region (H-T-H motif). NAD(+) is bound at residue 100-105 (GIGNLG). Residues 217 to 253 (RKAGEDSAAEDEGAPPMRATPASRKGPDGDMPAVMPA) form a disordered region.

The protein belongs to the transcriptional regulatory Rex family. Homodimer.

The protein resides in the cytoplasm. Modulates transcription in response to changes in cellular NADH/NAD(+) redox state. This is Redox-sensing transcriptional repressor Rex from Streptomyces griseus subsp. griseus (strain JCM 4626 / CBS 651.72 / NBRC 13350 / KCC S-0626 / ISP 5235).